The chain runs to 205 residues: Cytochrome c biogenesis ATP-binding export protein CcmA 1 (205 aa).

The region spanning 2–205 (LEARDLYCER…LALTGGEAGL (204 aa)) is the ABC transporter domain. 34–41 (GGNGAGKT) is a binding site for ATP.

This sequence belongs to the ABC transporter superfamily. CcmA exporter (TC 3.A.1.107) family. As to quaternary structure, the complex is composed of two ATP-binding proteins (CcmA) and two transmembrane proteins (CcmB).

It localises to the cell inner membrane. The catalysed reaction is heme b(in) + ATP + H2O = heme b(out) + ADP + phosphate + H(+). Part of the ABC transporter complex CcmAB involved in the biogenesis of c-type cytochromes; once thought to export heme, this seems not to be the case, but its exact role is uncertain. Responsible for energy coupling to the transport system. The sequence is that of Cytochrome c biogenesis ATP-binding export protein CcmA 1 from Salmonella paratyphi A (strain ATCC 9150 / SARB42).